The chain runs to 217 residues: MAKIQRVTEATLPTEFGIFKIVGFEFPDTKKEHVALVMGDVEDGQPVLARIHSECLTGDALHSLKCDCGFQLARALRQISEEGRGVLIYHREEGRGIGLINKIRAYALQDQGMDTIEANLALGFKADERNFSVCADIFEQLGVKAVRLLTNNPAKIETMKSAGINVVERVPLNVGENRYNVGYLDTKAKKMGHYIVHNNKKHFLECPHCQSEIPADE.

Residue 50 to 54 (RIHSE) participates in GTP binding. The Zn(2+) site is built by Cys55, Cys66, and Cys68. GTP-binding positions include Gln71, 93–95 (EGR), and Thr115. Asp127 (proton acceptor) is an active-site residue. Arg129 functions as the Nucleophile in the catalytic mechanism. Residues Thr150 and Lys155 each coordinate GTP.

Belongs to the GTP cyclohydrolase II family. The cofactor is Zn(2+).

The enzyme catalyses GTP + 4 H2O = 2,5-diamino-6-hydroxy-4-(5-phosphoribosylamino)-pyrimidine + formate + 2 phosphate + 3 H(+). Its pathway is cofactor biosynthesis; riboflavin biosynthesis; 5-amino-6-(D-ribitylamino)uracil from GTP: step 1/4. Catalyzes the conversion of GTP to 2,5-diamino-6-ribosylamino-4(3H)-pyrimidinone 5'-phosphate (DARP), formate and pyrophosphate. The protein is GTP cyclohydrolase-2 of Actinobacillus succinogenes (strain ATCC 55618 / DSM 22257 / CCUG 43843 / 130Z).